The sequence spans 427 residues: Phosphoribosylamine--glycine ligase (427 aa).

The ATP-grasp domain occupies 107-312 (KDLCARFNIP…LLALVNAAVD (206 aa)). 133 to 193 (IRQQGAPIVV…EEFLDGEEAS (61 aa)) contacts ATP. Mg(2+)-binding residues include Glu-282 and Asn-284.

This sequence belongs to the GARS family. The cofactor is Mg(2+). Mn(2+) serves as cofactor.

The enzyme catalyses 5-phospho-beta-D-ribosylamine + glycine + ATP = N(1)-(5-phospho-beta-D-ribosyl)glycinamide + ADP + phosphate + H(+). The protein operates within purine metabolism; IMP biosynthesis via de novo pathway; N(1)-(5-phospho-D-ribosyl)glycinamide from 5-phospho-alpha-D-ribose 1-diphosphate: step 2/2. This is Phosphoribosylamine--glycine ligase from Brucella melitensis biotype 1 (strain ATCC 23456 / CCUG 17765 / NCTC 10094 / 16M).